A 975-amino-acid polypeptide reads, in one-letter code: Leucine-zipper-like transcriptional regulator 1 homolog (975 aa).

The segment covering 16–32 (RGGGGGGCGGGGAGGSA) has biased composition (gly residues). 2 disordered regions span residues 16 to 41 (RGGG…TSGS) and 158 to 186 (MSSS…SCSS). Low complexity predominate over residues 174 to 186 (ASSSHPPGSSCSS). 6 Kelch repeats span residues 263-312 (AMFV…VAGS), 314-369 (MFIF…VYDN), 370-417 (KMWI…PVAV), 421-467 (AMYV…PSRR), 478-524 (FLYV…FHAS), and 530-581 (AMYI…FIVG). BTB domains follow at residues 574 to 670 (CDIQ…DLKD) and 801 to 870 (CDIS…KMPP).

The protein belongs to the LZTR1 family. In terms of assembly, component of some BCR (BTB-CUL3-RBX1) E3 ubiquitin-protein ligase complex. Expressed in Rdl-expressing neurons of the mushroom body, the neurons projecting to the LC9 optic glomerulus and in a neuronal cluster near the subesophageal ganglion (at protein level).

Its pathway is protein modification; protein ubiquitination. In terms of biological role, inhibitor of Ras signaling. Acts as a substrate-specific adapter of a BCR (BTB-CUL3-RBX1) E3 ubiquitin-protein ligase complex that mediates ubiquitination of Ras. Together with Nf1, plays an important role for normal sleep behavior, mainly during the night. Might affect sleep by modulating GABA signaling in Rdl-expressing neurons. Might play a role in the regulation of brain glycogen metabolism and organismal levels of triglycerides. This is Leucine-zipper-like transcriptional regulator 1 homolog from Drosophila melanogaster (Fruit fly).